The sequence spans 96 residues: Neutrophil defensin 1 (96 aa).

A signal peptide spans 1-19 (MRTLVILAAILLVALQAQA). Residues 20 to 66 (EPLQARTDEATAAQEQIPTDNPEVVVSLAWDESLAPKDSVPGLRKNM) constitute a propeptide that is removed on maturation. Cystine bridges form between cysteine 68–cysteine 96, cysteine 70–cysteine 85, and cysteine 75–cysteine 95. A Phosphotyrosine modification is found at tyrosine 87.

As to quaternary structure, tetramer. Dimer. Interacts with RETN. ADP-ribosylation drastically reduces cytotoxic and antibacterial activities, and enhances IL8 production.

It localises to the secreted. Its function is as follows. Effector molecule of the innate immune system that acts via antibiotic-like properties against a broad array of infectious agents including bacteria, fungi, and viruses or by promoting the activation and maturation of some APCs. Interacts with the essential precursor of cell wall synthesis lipid II to inhibit bacterial cell wall synthesis. Inhibits adenovirus infection via inhibition of viral disassembly at the vertex region, thereby restricting the release of internal capsid protein pVI, which is required for endosomal membrane penetration during cell entry. In addition, interaction with adenovirus capsid leads to the redirection of viral particles to TLR4 thereby promoting a NLRP3-mediated inflammasome response and interleukin 1-beta (IL-1beta) release. Induces the production of proinflammatory cytokines including type I interferon (IFN) in plasmacytoid dendritic cells (pDCs) by triggering the degradation of NFKBIA and nuclear translocation of IRF1, both of which are required for activation of pDCs. This Macaca mulatta (Rhesus macaque) protein is Neutrophil defensin 1.